The primary structure comprises 362 residues: 3-dehydroquinate synthase (362 aa).

NAD(+)-binding positions include 70 to 75, 104 to 108, 128 to 129, K141, and K150; these read DGESYK, GVVGD, and TT. The Zn(2+) site is built by E183, H246, and H263.

Belongs to the sugar phosphate cyclases superfamily. Dehydroquinate synthase family. Co(2+) is required as a cofactor. Requires Zn(2+) as cofactor. The cofactor is NAD(+).

Its subcellular location is the cytoplasm. The catalysed reaction is 7-phospho-2-dehydro-3-deoxy-D-arabino-heptonate = 3-dehydroquinate + phosphate. Its pathway is metabolic intermediate biosynthesis; chorismate biosynthesis; chorismate from D-erythrose 4-phosphate and phosphoenolpyruvate: step 2/7. Its function is as follows. Catalyzes the conversion of 3-deoxy-D-arabino-heptulosonate 7-phosphate (DAHP) to dehydroquinate (DHQ). This chain is 3-dehydroquinate synthase, found in Saccharophagus degradans (strain 2-40 / ATCC 43961 / DSM 17024).